Here is a 152-residue protein sequence, read N- to C-terminus: Ribonuclease H (152 aa).

The RNase H type-1 domain maps to 4 to 145 (SRSMVEIFSD…CDELARQAIA (142 aa)). Asp-13, Glu-51, Asp-73, and Asp-137 together coordinate Mg(2+).

It belongs to the RNase H family. In terms of assembly, monomer. Requires Mg(2+) as cofactor.

The protein resides in the cytoplasm. The enzyme catalyses Endonucleolytic cleavage to 5'-phosphomonoester.. Functionally, endonuclease that specifically degrades the RNA of RNA-DNA hybrids. The chain is Ribonuclease H from Syntrophotalea carbinolica (strain DSM 2380 / NBRC 103641 / GraBd1) (Pelobacter carbinolicus).